The following is a 634-amino-acid chain: (-)-limonene synthase, chloroplastic (634 aa).

A chloroplast-targeting transit peptide spans 1–21; the sequence is MSPVSAIPLAYKLCLPRSLIS. The (2E)-geranyl diphosphate site is built by Arg348, Asp385, Asp389, Arg526, and Gly529. Residues Asp385 and Asp389 each coordinate Mg(2+). The DDXXD motif signature appears at 385-389; it reads DDIYD. Positions 529 and 537 each coordinate Mg(2+).

It belongs to the terpene synthase family. Tpsb subfamily. Monomer. The cofactor is Mg(2+). Mn(2+) serves as cofactor.

The protein localises to the plastid. Its subcellular location is the chloroplast. The catalysed reaction is (2E)-geranyl diphosphate = (4S)-limonene + diphosphate. The protein operates within secondary metabolite biosynthesis; terpenoid biosynthesis. It functions in the pathway terpene metabolism; oleoresin biosynthesis. Functionally, monoterpene synthase (mono-TPS) involved in the biosynthesis of monoterpene natural products. Catalyzes the conversion of (2E)-geranyl diphosphate (GPP) into (-)-limonene. Not able to use geranylgeranyl pyrophosphate (GGPP) and farnesyl pyrophosphate (FPP) as substrates. The chain is (-)-limonene synthase, chloroplastic from Picea sitchensis (Sitka spruce).